Reading from the N-terminus, the 353-residue chain is Rhodopsin (353 aa).

Topologically, residues 1–36 (MNGTEGPYFYIPMVNTTGIVRSPYEYPQYYLVNPAA) are extracellular. 2 N-linked (GlcNAc...) asparagine glycosylation sites follow: Asn-2 and Asn-15. The chain crosses the membrane as a helical span at residues 37-61 (YAALGAYMFLLILVGFPINFLTLYV). The Cytoplasmic portion of the chain corresponds to 62–73 (TIEHKKLRTPLN). Residues 74–96 (YILLNLAVANLFMVFGGFTTTMY) form a helical membrane-spanning segment. Over 97–110 (TSMHGYFVLGRLGC) the chain is Extracellular. An intrachain disulfide couples Cys-110 to Cys-187. A helical transmembrane segment spans residues 111–133 (NLEGFFATLGGEIALWSLVVLAI). Residues 134–136 (ERW) carry the 'Ionic lock' involved in activated form stabilization motif. Over 134-152 (ERWMVVCKPISNFRFGEDH) the chain is Cytoplasmic. Residues 153 to 173 (AIMGLAFTWVMAAACAVPPLV) traverse the membrane as a helical segment. Residues 174-202 (GWSRYIPEGMQCSCGIDYYTRAEGFNNES) are Extracellular-facing. The N-linked (GlcNAc...) asparagine glycan is linked to Asn-200. A helical transmembrane segment spans residues 203–224 (FVIYMFVCHFLIPLVVVFFCYG). Residues 225–252 (RLLCAVKEAAAAQQESETTQRAEREVSR) lie on the Cytoplasmic side of the membrane. Residues 253-274 (MVVIMVVAFLICWCPYAGVAWY) traverse the membrane as a helical segment. The Extracellular portion of the chain corresponds to 275 to 286 (IFTHQGSEFGPL). A helical membrane pass occupies residues 287–308 (FMTFPAFFAKSSSIYNPMIYIC). Lys-296 is subject to N6-(retinylidene)lysine. Topologically, residues 309–353 (MNKQFRHCMITTLCCGKNPFEEEEGASTTSKTEASSVSSSSVSPA) are cytoplasmic. 2 S-palmitoyl cysteine lipidation sites follow: Cys-322 and Cys-323. Residues 330–353 (EEEGASTTSKTEASSVSSSSVSPA) are disordered. Residues 334–353 (ASTTSKTEASSVSSSSVSPA) are compositionally biased toward low complexity.

The protein belongs to the G-protein coupled receptor 1 family. Opsin subfamily. Phosphorylated on some or all of the serine and threonine residues present in the C-terminal region. Post-translationally, contains one covalently linked retinal chromophore.

Its subcellular location is the membrane. The protein localises to the cell projection. It localises to the cilium. The protein resides in the photoreceptor outer segment. Its function is as follows. Photoreceptor required for image-forming vision at low light intensity. While most salt water fish species use retinal as chromophore, most freshwater fish use 3-dehydroretinal, or a mixture of retinal and 3-dehydroretinal. Light-induced isomerization of 11-cis to all-trans retinal triggers a conformational change that activates signaling via G-proteins. Subsequent receptor phosphorylation mediates displacement of the bound G-protein alpha subunit by arrestin and terminates signaling. The chain is Rhodopsin (rho) from Chelon saliens (Leaping mullet).